A 144-amino-acid chain; its full sequence is MNRTILVPIDISDSELTQRVISHVEAEAKIDDAKVHFLTVIPSLPYYASLGLAYSAELPAMDDLKAEAKSQLEAIIKKFNLPADRVQAHVAEGSPKDKILEMAKKLPADMVIIASHRPDITTYLLGSNAAAVVRHAECSVLVVR.

Belongs to the universal stress protein A family. As to quaternary structure, homodimer.

This chain is Universal stress protein F (uspF), found in Salmonella typhi.